The primary structure comprises 66 residues: Large ribosomal subunit protein uL29 (66 aa).

This sequence belongs to the universal ribosomal protein uL29 family.

This chain is Large ribosomal subunit protein uL29, found in Borrelia duttonii (strain Ly).